Here is a 392-residue protein sequence, read N- to C-terminus: Chorismate synthase (392 aa).

NADP(+) is bound by residues Arg40 and Arg46. Residues 135 to 137 (RAS), 256 to 257 (QA), Gly300, 315 to 319 (KPIST), and Arg341 contribute to the FMN site.

This sequence belongs to the chorismate synthase family. In terms of assembly, homotetramer. The cofactor is FMNH2.

It carries out the reaction 5-O-(1-carboxyvinyl)-3-phosphoshikimate = chorismate + phosphate. It participates in metabolic intermediate biosynthesis; chorismate biosynthesis; chorismate from D-erythrose 4-phosphate and phosphoenolpyruvate: step 7/7. Its function is as follows. Catalyzes the anti-1,4-elimination of the C-3 phosphate and the C-6 proR hydrogen from 5-enolpyruvylshikimate-3-phosphate (EPSP) to yield chorismate, which is the branch point compound that serves as the starting substrate for the three terminal pathways of aromatic amino acid biosynthesis. This reaction introduces a second double bond into the aromatic ring system. This chain is Chorismate synthase, found in Acidothermus cellulolyticus (strain ATCC 43068 / DSM 8971 / 11B).